We begin with the raw amino-acid sequence, 470 residues long: Protein nucleotidyltransferase YdiU (470 aa).

ATP is bound by residues Gly-86, Gly-88, Arg-89, Lys-109, Asp-121, Gly-122, Arg-172, and Arg-179. Residue Asp-244 is the Proton acceptor of the active site. Mg(2+) is bound by residues Asn-245 and Asp-254. Asp-254 is a binding site for ATP.

The protein belongs to the SELO family. Requires Mg(2+) as cofactor. Mn(2+) is required as a cofactor.

It carries out the reaction L-seryl-[protein] + ATP = 3-O-(5'-adenylyl)-L-seryl-[protein] + diphosphate. It catalyses the reaction L-threonyl-[protein] + ATP = 3-O-(5'-adenylyl)-L-threonyl-[protein] + diphosphate. The enzyme catalyses L-tyrosyl-[protein] + ATP = O-(5'-adenylyl)-L-tyrosyl-[protein] + diphosphate. The catalysed reaction is L-histidyl-[protein] + UTP = N(tele)-(5'-uridylyl)-L-histidyl-[protein] + diphosphate. It carries out the reaction L-seryl-[protein] + UTP = O-(5'-uridylyl)-L-seryl-[protein] + diphosphate. It catalyses the reaction L-tyrosyl-[protein] + UTP = O-(5'-uridylyl)-L-tyrosyl-[protein] + diphosphate. Its function is as follows. Nucleotidyltransferase involved in the post-translational modification of proteins. It can catalyze the addition of adenosine monophosphate (AMP) or uridine monophosphate (UMP) to a protein, resulting in modifications known as AMPylation and UMPylation. This is Protein nucleotidyltransferase YdiU from Roseobacter denitrificans (strain ATCC 33942 / OCh 114) (Erythrobacter sp. (strain OCh 114)).